Consider the following 805-residue polypeptide: H(+)/Cl(-) exchange transporter 7 (805 aa).

The interval 1–49 (MANVSKKVSWSGRDRDDEEAAPLLRRTARPGGGTPLLNGAGPGAARQSP) is disordered. The Cytoplasmic segment spans residues 1 to 126 (MANVSKKVSW…TAFRTVEIKR (126 aa)). Phosphoserine occurs at positions 9 and 60. Transmembrane regions (helical) follow at residues 127 to 159 (WVIC…YRVI) and 174 to 197 (FSLL…VAFI). The short motif at 203-207 (GSGIP) is the Selectivity filter part_1 element. Residue Ser204 participates in chloride binding. The segment at residues 206 to 213 (IPQIKCFL) is an intramembrane region (helical). A run of 2 helical transmembrane segments spans residues 223-241 (RLKT…VVGG) and 247-264 (EGPM…ISQG). Positions 245 to 249 (GKEGP) match the Selectivity filter part_2 motif. 2 consecutive intramembrane regions (helical) follow at residues 288–300 (FVSA…VSAA) and 304–312 (PVGGVLFSL). The next 5 membrane-spanning stretches (helical) occupy residues 322–341 (FLTW…LNFV), 375–405 (IPVF…FRIR), 410–432 (PCLQ…FVLI), 487–507 (PLTL…TYGL), and 512–535 (GVFI…LSYL). The Selectivity filter part_3 motif lies at 512 to 516 (GVFIP). Phe514 contributes to the chloride binding site. An intramembrane region (helical) is located at residues 545–559 (GKYALMGAAAQLGGI). The note=Loop between two helices intramembrane region spans 560 to 562 (VRM). The segment at residues 563-574 (TLSLTVIMMEAT) is an intramembrane region (helical). The note=Loop between two helices intramembrane region spans 575-578 (SNVT). A helical membrane pass occupies residues 579-597 (YGFPIMLVLMTAKIVGDVF). Residues 598-805 (IEGLYDMHIQ…GLEELSLAQT (208 aa)) are Cytoplasmic-facing. Tyr602 is a binding site for chloride. CBS domains are found at residues 631-695 (MSTP…VFVE) and 741-799 (MNPS…GLEE). Residues 658-660 (HNG) and 783-786 (TRKD) contribute to the ATP site. Ser801 is subject to Phosphoserine.

Belongs to the chloride channel (TC 2.A.49) family. ClC-7/CLCN7 subfamily. As to quaternary structure, chloride channel 7 are heteromers of alpha (CLCN7) and beta (OSTM1) subunits. Brain and kidney.

It is found in the lysosome membrane. The enzyme catalyses 2 chloride(in) + H(+)(out) = 2 chloride(out) + H(+)(in). Slowly voltage-gated channel mediating the exchange of chloride ions against protons. Functions as antiporter and contributes to the acidification of the lysosome lumen and may be involved in maintaining lysosomal pH. The CLC channel family contains both chloride channels and proton-coupled anion transporters that exchange chloride or another anion for protons. The presence of conserved gating glutamate residues is typical for family members that function as antiporters. The sequence is that of H(+)/Cl(-) exchange transporter 7 from Homo sapiens (Human).